We begin with the raw amino-acid sequence, 57 residues long: Phosphatase RapH inhibitor (57 aa).

Propeptides lie at residues 1–34 and 41–57; these read MPIK…FKES and YIDH…KALS. The segment at 26-57 is disordered; the sequence is TNSGGFKESTDRNTTYIDHSPYKLSDQKKALS.

It belongs to the Phr family. Contains a predicted signal peptide cleavage site in the N-terminal region, however the propeptide is probably only subject to processing events at the ends of the mature peptide.

Its subcellular location is the secreted. The protein resides in the cytoplasm. Its function is as follows. Signaling molecule involved the regulation of both sporulation and competence. Secreted during production, but the mature peptide acts intracellularly, indicating that it needs to be imported into the cell to function. Acts by inhibiting RapH activity. Can inhibit both RapH activities, the dephosphorylation of Spo0F and the sequestration of ComA. The sequence is that of Phosphatase RapH inhibitor (phrH) from Bacillus subtilis (strain 168).